The sequence spans 198 residues: NAD(P)H dehydrogenase (quinone) (198 aa).

The Flavodoxin-like domain occupies 4–189 (ILVLYYSMYG…SIARYQGEYV (186 aa)). Residues 10–15 (SMYGHI) and 78–80 (TRF) contribute to the FMN site. Residue Tyr-12 coordinates NAD(+). Residue Trp-98 participates in substrate binding. FMN is bound by residues 113–118 (STGTGG) and His-133.

The protein belongs to the WrbA family. The cofactor is FMN.

It catalyses the reaction a quinone + NADH + H(+) = a quinol + NAD(+). The catalysed reaction is a quinone + NADPH + H(+) = a quinol + NADP(+). The sequence is that of NAD(P)H dehydrogenase (quinone) from Salmonella typhi.